We begin with the raw amino-acid sequence, 438 residues long: Tyrosine--tRNA ligase (438 aa).

Residue Tyr-47 coordinates L-tyrosine. Residues Pro-52 to Gly-61 carry the 'HIGH' region motif. L-tyrosine contacts are provided by Tyr-183 and Gln-187. Positions Lys-243–Thr-247 match the 'KMSKS' region motif. Lys-246 provides a ligand contact to ATP. An S4 RNA-binding domain is found at Leu-370 to Ile-436.

The protein belongs to the class-I aminoacyl-tRNA synthetase family. TyrS type 1 subfamily. Homodimer.

Its subcellular location is the cytoplasm. The enzyme catalyses tRNA(Tyr) + L-tyrosine + ATP = L-tyrosyl-tRNA(Tyr) + AMP + diphosphate + H(+). In terms of biological role, catalyzes the attachment of tyrosine to tRNA(Tyr) in a two-step reaction: tyrosine is first activated by ATP to form Tyr-AMP and then transferred to the acceptor end of tRNA(Tyr). This chain is Tyrosine--tRNA ligase, found in Rhodopirellula baltica (strain DSM 10527 / NCIMB 13988 / SH1).